We begin with the raw amino-acid sequence, 704 residues long: Elongation factor G (704 aa).

The tr-type G domain occupies 8-291; it reads DRVRNIGIMA…AVIEYLASPV (284 aa). Residues 17 to 24, 90 to 94, and 144 to 147 contribute to the GTP site; these read AHIDAGKT, DTPGH, and NKMD.

The protein belongs to the TRAFAC class translation factor GTPase superfamily. Classic translation factor GTPase family. EF-G/EF-2 subfamily.

The protein resides in the cytoplasm. Functionally, catalyzes the GTP-dependent ribosomal translocation step during translation elongation. During this step, the ribosome changes from the pre-translocational (PRE) to the post-translocational (POST) state as the newly formed A-site-bound peptidyl-tRNA and P-site-bound deacylated tRNA move to the P and E sites, respectively. Catalyzes the coordinated movement of the two tRNA molecules, the mRNA and conformational changes in the ribosome. The protein is Elongation factor G of Chlorobium chlorochromatii (strain CaD3).